A 147-amino-acid polypeptide reads, in one-letter code: Cyanate hydratase (147 aa).

Catalysis depends on residues Arg88, Glu91, and Ser114.

This sequence belongs to the cyanase family.

The catalysed reaction is cyanate + hydrogencarbonate + 3 H(+) = NH4(+) + 2 CO2. In terms of biological role, catalyzes the reaction of cyanate with bicarbonate to produce ammonia and carbon dioxide. In Dechloromonas aromatica (strain RCB), this protein is Cyanate hydratase.